Here is a 147-residue protein sequence, read N- to C-terminus: Large ribosomal subunit protein uL13 (147 aa).

It belongs to the universal ribosomal protein uL13 family. As to quaternary structure, part of the 50S ribosomal subunit.

This protein is one of the early assembly proteins of the 50S ribosomal subunit, although it is not seen to bind rRNA by itself. It is important during the early stages of 50S assembly. This is Large ribosomal subunit protein uL13 from Corynebacterium glutamicum (strain R).